Here is an 894-residue protein sequence, read N- to C-terminus: Eukaryotic translation initiation factor 3 subunit C (894 aa).

Disordered regions lie at residues 1–28 (MSRFYRRGASDSDTDSSEDEVEELKANK) and 162–235 (SDYR…VTKM). Composition is skewed to acidic residues over residues 12–22 (SDTDSSEDEVE), 169–189 (DEDGYETPEDENDEDDFEEVP), and 203–214 (SESESDSDDDDS). Residues 215-224 (FNWSSEPDTN) are compositionally biased toward polar residues. The PCI domain maps to 625–801 (YHMHINVELM…DCLIMHRVEP (177 aa)). Positions 824–894 (QILEPRTGRG…RRHPQKPRAF (71 aa)) are disordered. Residues 845-854 (RNERQGDKQK) are compositionally biased toward basic and acidic residues. The segment covering 855–870 (GSGGFQGERRGGPGGP) has biased composition (gly residues). Residues 884–894 (QRRHPQKPRAF) are compositionally biased toward basic residues.

Belongs to the eIF-3 subunit C family. In terms of assembly, component of the eukaryotic translation initiation factor 3 (eIF-3) complex.

It is found in the cytoplasm. In terms of biological role, component of the eukaryotic translation initiation factor 3 (eIF-3) complex, which is involved in protein synthesis of a specialized repertoire of mRNAs and, together with other initiation factors, stimulates binding of mRNA and methionyl-tRNAi to the 40S ribosome. The eIF-3 complex specifically targets and initiates translation of a subset of mRNAs involved in cell proliferation. The protein is Eukaryotic translation initiation factor 3 subunit C of Caenorhabditis briggsae.